The primary structure comprises 51 residues: Bacteriocin aureocin A53 (51 aa).

Position 1 is an N-formylmethionine (Met1).

The protein resides in the secreted. In terms of biological role, antibacterial peptide active against a broad range of lactic acid bacteria, L.monocytogenes and many epidemiologically unrelated strains of S.aureus involved in bovine mastitis. The sequence is that of Bacteriocin aureocin A53 (aucA) from Staphylococcus aureus.